Consider the following 408-residue polypeptide: LL-diaminopimelate aminotransferase (408 aa).

Residues tyrosine 15 and glycine 42 each coordinate substrate. Pyridoxal 5'-phosphate is bound by residues tyrosine 72, 108–109 (SK), tyrosine 132, asparagine 187, tyrosine 218, and 246–248 (SFS). Substrate is bound by residues lysine 109, tyrosine 132, and asparagine 187. The residue at position 249 (lysine 249) is an N6-(pyridoxal phosphate)lysine. 2 residues coordinate pyridoxal 5'-phosphate: arginine 257 and asparagine 292. The substrate site is built by asparagine 292 and arginine 388.

The protein belongs to the class-I pyridoxal-phosphate-dependent aminotransferase family. LL-diaminopimelate aminotransferase subfamily. As to quaternary structure, homodimer. Pyridoxal 5'-phosphate serves as cofactor.

The enzyme catalyses (2S,6S)-2,6-diaminopimelate + 2-oxoglutarate = (S)-2,3,4,5-tetrahydrodipicolinate + L-glutamate + H2O + H(+). The protein operates within amino-acid biosynthesis; L-lysine biosynthesis via DAP pathway; LL-2,6-diaminopimelate from (S)-tetrahydrodipicolinate (aminotransferase route): step 1/1. In terms of biological role, involved in the synthesis of meso-diaminopimelate (m-DAP or DL-DAP), required for both lysine and peptidoglycan biosynthesis. Catalyzes the direct conversion of tetrahydrodipicolinate to LL-diaminopimelate. The sequence is that of LL-diaminopimelate aminotransferase from Prochlorococcus marinus (strain AS9601).